The primary structure comprises 181 residues: Histone deacetylase complex subunit SAP30L-B (181 aa).

Intrachain disulfides connect C26–C27 and C35–C71. The Atypical zinc-finger motif lies at 26 to 74 (CCLIDGGERCPRPAGNASFSKRVQKSISQKKLKLDIDKSVRHLYICDFH). The segment at 82 to 103 (RNKRKRKTSDDGGDSPEHETDV) is disordered. The short motif at 83-88 (NKRKRK) is the Nuclear localization signal (NLS) element. The tract at residues 85-87 (RKR) is important for DNA and phosphoinositide binding.

This sequence belongs to the SAP30 family. Interacts with components of the histone deacetylase complex sin3a, hdac1 and hdac2. Binds histones and nucleosomes.

The protein resides in the nucleus. It is found in the nucleolus. Functionally, functions as a transcription repressor, probably via its interaction with histone deacetylase complexes. Involved in the functional recruitment of the class 1 Sin3-histone deacetylase complex (HDAC) to the nucleolus. Binds DNA, apparently without sequence-specificity, and bends bound double-stranded DNA. Binds phosphoinositol phosphates (phosphoinositol 3-phosphate, phosphoinositol 4-phosphate and phosphoinositol 5-phosphate) via the same basic sequence motif that mediates DNA binding and nuclear import. This Xenopus laevis (African clawed frog) protein is Histone deacetylase complex subunit SAP30L-B (sap30l-b).